Consider the following 285-residue polypeptide: Phosphoribosylaminoimidazole-succinocarboxamide synthase (285 aa).

Belongs to the SAICAR synthetase family.

The enzyme catalyses 5-amino-1-(5-phospho-D-ribosyl)imidazole-4-carboxylate + L-aspartate + ATP = (2S)-2-[5-amino-1-(5-phospho-beta-D-ribosyl)imidazole-4-carboxamido]succinate + ADP + phosphate + 2 H(+). The protein operates within purine metabolism; IMP biosynthesis via de novo pathway; 5-amino-1-(5-phospho-D-ribosyl)imidazole-4-carboxamide from 5-amino-1-(5-phospho-D-ribosyl)imidazole-4-carboxylate: step 1/2. This is Phosphoribosylaminoimidazole-succinocarboxamide synthase from Leptospira interrogans serogroup Icterohaemorrhagiae serovar copenhageni (strain Fiocruz L1-130).